The chain runs to 130 residues: Small ribosomal subunit protein uS9 (130 aa).

The protein belongs to the universal ribosomal protein uS9 family.

The polypeptide is Small ribosomal subunit protein uS9 (Hahella chejuensis (strain KCTC 2396)).